The primary structure comprises 291 residues: 4-hydroxy-tetrahydrodipicolinate synthase (291 aa).

Position 44 (Thr44) interacts with pyruvate. Tyr132 functions as the Proton donor/acceptor in the catalytic mechanism. Catalysis depends on Lys160, which acts as the Schiff-base intermediate with substrate. Ile202 serves as a coordination point for pyruvate.

This sequence belongs to the DapA family. As to quaternary structure, homotetramer; dimer of dimers.

The protein resides in the cytoplasm. It catalyses the reaction L-aspartate 4-semialdehyde + pyruvate = (2S,4S)-4-hydroxy-2,3,4,5-tetrahydrodipicolinate + H2O + H(+). It participates in amino-acid biosynthesis; L-lysine biosynthesis via DAP pathway; (S)-tetrahydrodipicolinate from L-aspartate: step 3/4. Catalyzes the condensation of (S)-aspartate-beta-semialdehyde [(S)-ASA] and pyruvate to 4-hydroxy-tetrahydrodipicolinate (HTPA). The protein is 4-hydroxy-tetrahydrodipicolinate synthase of Syntrophobacter fumaroxidans (strain DSM 10017 / MPOB).